Consider the following 297-residue polypeptide: Formylmethanofuran--tetrahydromethanopterin formyltransferase (297 aa).

This sequence belongs to the FTR family. As to quaternary structure, homotetramer.

The protein localises to the cytoplasm. The enzyme catalyses N-formylmethanofuran + 5,6,7,8-tetrahydromethanopterin + H(+) = N(5)-formyl-5,6,7,8-tetrahydromethanopterin + methanofuran. The protein operates within one-carbon metabolism; methanogenesis from CO(2); 5,10-methenyl-5,6,7,8-tetrahydromethanopterin from CO(2): step 2/3. Functionally, catalyzes the reversible transfer of a formyl group from formylmethanofuran (formyl-MFR) to tetrahydromethanopterin (H(4)MPT) to produce 5-formyl tetrahydromethanopterin (5-formyl-H(4)MPT) and methanofuran (MFR). This Methanothermus fervidus (strain ATCC 43054 / DSM 2088 / JCM 10308 / V24 S) protein is Formylmethanofuran--tetrahydromethanopterin formyltransferase.